The following is a 418-amino-acid chain: tRNA-2-methylthio-N(6)-dimethylallyladenosine synthase (418 aa).

An MTTase N-terminal domain is found at Pro-2–Leu-118. 6 residues coordinate [4Fe-4S] cluster: Cys-11, Cys-47, Cys-81, Cys-134, Cys-138, and Cys-141. The 233-residue stretch at Leu-120–Ala-352 folds into the Radical SAM core domain. In terms of domain architecture, TRAM spans Ser-354–Lys-414.

This sequence belongs to the methylthiotransferase family. MiaB subfamily. As to quaternary structure, monomer. [4Fe-4S] cluster serves as cofactor.

The protein localises to the cytoplasm. It catalyses the reaction N(6)-dimethylallyladenosine(37) in tRNA + (sulfur carrier)-SH + AH2 + 2 S-adenosyl-L-methionine = 2-methylsulfanyl-N(6)-dimethylallyladenosine(37) in tRNA + (sulfur carrier)-H + 5'-deoxyadenosine + L-methionine + A + S-adenosyl-L-homocysteine + 2 H(+). In terms of biological role, catalyzes the methylthiolation of N6-(dimethylallyl)adenosine (i(6)A), leading to the formation of 2-methylthio-N6-(dimethylallyl)adenosine (ms(2)i(6)A) at position 37 in tRNAs that read codons beginning with uridine. The protein is tRNA-2-methylthio-N(6)-dimethylallyladenosine synthase of Dehalococcoides mccartyi (strain ATCC BAA-2266 / KCTC 15142 / 195) (Dehalococcoides ethenogenes (strain 195)).